Consider the following 110-residue polypeptide: Large ribosomal subunit protein uL22 (110 aa).

This sequence belongs to the universal ribosomal protein uL22 family. In terms of assembly, part of the 50S ribosomal subunit.

Functionally, this protein binds specifically to 23S rRNA; its binding is stimulated by other ribosomal proteins, e.g. L4, L17, and L20. It is important during the early stages of 50S assembly. It makes multiple contacts with different domains of the 23S rRNA in the assembled 50S subunit and ribosome. The globular domain of the protein is located near the polypeptide exit tunnel on the outside of the subunit, while an extended beta-hairpin is found that lines the wall of the exit tunnel in the center of the 70S ribosome. This is Large ribosomal subunit protein uL22 from Photobacterium profundum (strain SS9).